The primary structure comprises 158 residues: C-type lectin lectoxin-Enh7 (158 aa).

The signal sequence occupies residues 1–23 (MGQFTVVSLGLLAVFLSLSGAKG). Cystine bridges form between cysteine 26-cysteine 37, cysteine 54-cysteine 154, and cysteine 129-cysteine 146. The 123-residue stretch at 33–155 (RNGVCNKLFP…CASLHPFICQ (123 aa)) folds into the C-type lectin domain. A Mannose-binding motif is present at residues 119–121 (EPN). Residues glutamate 127, asparagine 142, and aspartate 143 each coordinate Ca(2+).

It belongs to the true venom lectin family. As to expression, expressed by the venom gland.

It is found in the secreted. Functionally, mannose-binding lectin which recognizes specific carbohydrate structures and agglutinates a variety of animal cells by binding to cell-surface glycoproteins and glycolipids. May be a calcium-dependent lectin. This is C-type lectin lectoxin-Enh7 from Pseudoferania polylepis (Macleay's water snake).